The chain runs to 246 residues: 3'(2'),5'-bisphosphate nucleotidase CysQ (246 aa).

5 residues coordinate Mg(2+): E64, D83, L85, D86, and D205. E64 serves as a coordination point for substrate. Residues 85 to 88 and D205 contribute to the substrate site; that span reads LDGT.

It belongs to the inositol monophosphatase superfamily. CysQ family. It depends on Mg(2+) as a cofactor.

It is found in the cell inner membrane. It catalyses the reaction adenosine 3',5'-bisphosphate + H2O = AMP + phosphate. Converts adenosine-3',5'-bisphosphate (PAP) to AMP. The sequence is that of 3'(2'),5'-bisphosphate nucleotidase CysQ from Salmonella typhimurium (strain LT2 / SGSC1412 / ATCC 700720).